Consider the following 309-residue polypeptide: 2-phospho-L-lactate transferase (309 aa).

2 residues coordinate 7,8-didemethyl-8-hydroxy-5-deazariboflavin: D50 and K89.

Belongs to the CofD family. As to quaternary structure, homodimer. The cofactor is Mg(2+).

It catalyses the reaction (2S)-lactyl-2-diphospho-5'-guanosine + 7,8-didemethyl-8-hydroxy-5-deazariboflavin = oxidized coenzyme F420-0 + GMP + H(+). Its pathway is cofactor biosynthesis; coenzyme F420 biosynthesis. In terms of biological role, catalyzes the transfer of the 2-phospholactate moiety from (2S)-lactyl-2-diphospho-5'-guanosine to 7,8-didemethyl-8-hydroxy-5-deazariboflavin (FO) with the formation of oxidized coenzyme F420-0 and GMP. The polypeptide is 2-phospho-L-lactate transferase (Methanococcus maripaludis (strain C6 / ATCC BAA-1332)).